The following is a 434-amino-acid chain: Methylenetetrahydrofolate--tRNA-(uracil-5-)-methyltransferase TrmFO (434 aa).

9–14 (GAGLAG) is a binding site for FAD.

It belongs to the MnmG family. TrmFO subfamily. The cofactor is FAD.

The protein resides in the cytoplasm. It catalyses the reaction uridine(54) in tRNA + (6R)-5,10-methylene-5,6,7,8-tetrahydrofolate + NADH + H(+) = 5-methyluridine(54) in tRNA + (6S)-5,6,7,8-tetrahydrofolate + NAD(+). The catalysed reaction is uridine(54) in tRNA + (6R)-5,10-methylene-5,6,7,8-tetrahydrofolate + NADPH + H(+) = 5-methyluridine(54) in tRNA + (6S)-5,6,7,8-tetrahydrofolate + NADP(+). In terms of biological role, catalyzes the folate-dependent formation of 5-methyl-uridine at position 54 (M-5-U54) in all tRNAs. In Listeria welshimeri serovar 6b (strain ATCC 35897 / DSM 20650 / CCUG 15529 / CIP 8149 / NCTC 11857 / SLCC 5334 / V8), this protein is Methylenetetrahydrofolate--tRNA-(uracil-5-)-methyltransferase TrmFO.